Reading from the N-terminus, the 157-residue chain is CAPA peptides (157 aa).

Residues 1–21 form the signal peptide; the sequence is MQPTMRIIVSMALLAYAVASA. Positions 22 to 28 are excised as a propeptide; the sequence is YHSNVKL. At V42 the chain carries Valine amide. Positions 45 to 66 are excised as a propeptide; that stretch reads ASGNTWQLPLNDLYPEYEPAQV. At Q69 the chain carries Pyrrolidone carboxylic acid; partial. A Valine amide modification is found at V76. Leucine amide occurs at positions 85 and 117. Positions 120–157 are excised as a propeptide; it reads AFKNDDDEITIQNESNDHSEPEQTELIHEDRRKRQTLN. The tract at residues 131–157 is disordered; it reads QNESNDHSEPEQTELIHEDRRKRQTLN. The span at 134 to 151 shows a compositional bias: basic and acidic residues; the sequence is SNDHSEPEQTELIHEDRR.

Belongs to the pyrokinin family. As to expression, CAPA-periviscerokinin 1: Expressed in corpora cardiaca (CC), corpora allata (CA), antennal lobe (AL) and gnathal ganglion (GNG) (at protein level). Expression detected in most animals in CC and CA and in some animals in AL and GNG (at protein level). CAPA-periviscerokinin 2: Expressed in corpora cardiaca (CC), corpora allata (CA), antennal lobe (AL) and gnathal ganglion (GNG) (at protein level). For non-pyroglutamate form, expression in AL detected in all animals, in CC, CA and GNG in most animals (at protein level). For pyroglutamate form, expression in CC and CA detected in most animals, in AL and GNG in some animals (at protein level). CAPA-periviscerokinin 3: Expressed in corpora cardiaca (CC), corpora allata (CA), antennal lobe (AL) and gnathal ganglion (GNG). Expression detected in most animals in CC and CA and in some animals in AL and GNG (at protein level). CAPA-precursor-related peptide 3: Expressed in corpora cardiaca (CC), corpora allata (CA), antennal lobe (AL) and gnathal ganglion (GNG) (at protein level). Expression in CC and CA detected in some animals, expression in Al and GNG detected in few animals (at protein level). CAPA-trypto-pyrokinin: Expressed in corpora cardiaca (CC), corpora allata (CA), antennal lobe (AL) and gnathal ganglion (GNG) (at protein level). Expression in CC, CA and GNG detected in most animals, in AL in some animals (at protein level).

The protein resides in the secreted. In terms of biological role, myoactive. This Agrotis ipsilon (Black cutworm moth) protein is CAPA peptides.